A 37-amino-acid polypeptide reads, in one-letter code: Islet amyloid polypeptide (37 aa).

Cysteines 2 and 7 form a disulfide. The residue at position 37 (tyrosine 37) is a Tyrosine amide.

It belongs to the calcitonin family. In terms of assembly, can form homodimers. Interacts with IDE and INS. Interaction with INS inhibits homodimerization and fibril formation.

The protein localises to the secreted. In terms of biological role, amylin/IAPP is a glucoregulatory peptide hormone that plays an important role in the regulation of energy homeostasis. Selectively inhibits insulin-stimulated glucose utilization and glycogen deposition in muscle, while not affecting adipocyte glucose metabolism. IAPP function is mediated by the CALCR-RAMPs (AMYRs) receptor complexes. Amylin can also bind CALCR receptor in the absence of RAMPs, although it is more selective for AMYRs. The chain is Islet amyloid polypeptide (IAPP) from Cricetulus griseus (Chinese hamster).